Here is a 184-residue protein sequence, read N- to C-terminus: UPF0149 protein Pmen_0324 (184 aa).

This sequence belongs to the UPF0149 family.

The sequence is that of UPF0149 protein Pmen_0324 from Ectopseudomonas mendocina (strain ymp) (Pseudomonas mendocina).